A 486-amino-acid chain; its full sequence is ATP synthase subunit beta (486 aa).

ATP is bound at residue 167-174 (GGAGVGKT).

Belongs to the ATPase alpha/beta chains family. As to quaternary structure, F-type ATPases have 2 components, CF(1) - the catalytic core - and CF(0) - the membrane proton channel. CF(1) has five subunits: alpha(3), beta(3), gamma(1), delta(1), epsilon(1). CF(0) has three main subunits: a(1), b(2) and c(9-12). The alpha and beta chains form an alternating ring which encloses part of the gamma chain. CF(1) is attached to CF(0) by a central stalk formed by the gamma and epsilon chains, while a peripheral stalk is formed by the delta and b chains.

The protein resides in the cell inner membrane. The catalysed reaction is ATP + H2O + 4 H(+)(in) = ADP + phosphate + 5 H(+)(out). Functionally, produces ATP from ADP in the presence of a proton gradient across the membrane. The catalytic sites are hosted primarily by the beta subunits. The sequence is that of ATP synthase subunit beta from Anaplasma marginale (strain St. Maries).